Here is a 474-residue protein sequence, read N- to C-terminus: Adenosylhomocysteinase (474 aa).

3 residues coordinate substrate: Thr-61, Asp-136, and Glu-196. Position 197–199 (197–199 (TTT)) interacts with NAD(+). Substrate is bound by residues Lys-226 and Asp-230. NAD(+) is bound by residues Asn-231, 260 to 265 (GYGDVG), Glu-283, Asn-318, 339 to 341 (IGH), and Asn-384.

Belongs to the adenosylhomocysteinase family. It depends on NAD(+) as a cofactor.

It is found in the cytoplasm. It carries out the reaction S-adenosyl-L-homocysteine + H2O = L-homocysteine + adenosine. Its pathway is amino-acid biosynthesis; L-homocysteine biosynthesis; L-homocysteine from S-adenosyl-L-homocysteine: step 1/1. May play a key role in the regulation of the intracellular concentration of adenosylhomocysteine. The protein is Adenosylhomocysteinase of Ralstonia nicotianae (strain ATCC BAA-1114 / GMI1000) (Ralstonia solanacearum).